The sequence spans 44 residues: Thymosin beta (44 aa).

Residues Met1 to Gly44 form a disordered region. Ser2 bears the N-acetylserine mark.

Expressed in regenerating axons.

It localises to the cytoplasm. The protein resides in the cytoskeleton. In terms of biological role, plays an important role in the organization of the cytoskeleton. Binds to and sequesters actin monomers (G actin) and therefore inhibits actin polymerization. May be involved in the regulation of structural plasticity in the CNS. This is Thymosin beta from Aplysia californica (California sea hare).